Reading from the N-terminus, the 296-residue chain is Dof zinc finger protein DOF3.7 (296 aa).

A disordered region spans residues 41-69 (NTRPNATASNGGSGGNTNNTATMETRKAR). Positions 45-62 (NATASNGGSGGNTNNTAT) are enriched in low complexity. The Dof-type zinc finger occupies 74-128 (VNCPRCNSTNTKFCYYNNYSLTQPRYFCKGCRRYWTEGGSLRNVPVGGSSRKNKR). Zn(2+)-binding residues include cysteine 76, cysteine 79, cysteine 101, and cysteine 104. The tract at residues 115 to 146 (RNVPVGGSSRKNKRSSTPLASPSNPKLPDLNP) is disordered. Positions 129–138 (SSTPLASPSN) are enriched in polar residues.

As to expression, expressed in the phloem of the mother plant, including in roots, stem, leaves and flowers, but not present in the seed and embryo. In maturing siliques, found all through the funiculus connecting the placenta to the ovule, but not in the ovule.

The protein resides in the nucleus. In terms of biological role, transcription factor specifically involved in the maternal control of seed germination. Regulates transcription by binding to a 5'-AA[AG]G-3' consensus core sequence. May ensure the inactivity of a component that would be activated to trigger germination as a consequence of red light perception. This is Dof zinc finger protein DOF3.7 (DOF3.7) from Arabidopsis thaliana (Mouse-ear cress).